A 928-amino-acid polypeptide reads, in one-letter code: Sodium/calcium exchanger 3 (928 aa).

The first 30 residues, 1–30, serve as a signal peptide directing secretion; the sequence is MAWLRLQPLTSAFLHFGLVTFVLFLNCLRA. The Extracellular portion of the chain corresponds to 31–73; the sequence is EAGDSGDVPSAGQNNESCSGSSDCKEGVILPIWYPENPSLGDK. N45 carries N-linked (GlcNAc...) asparagine glycosylation. Residues 74–94 traverse the membrane as a helical segment; that stretch reads IARVIVYFVALIYMFLGVSII. Residues 95–147 are Cytoplasmic-facing; it reads ADRFMASIEVITSQEREVTIKKPNGETSTTTIRVWNETVSNLTLMALGSSAPE. The helical transmembrane segment at 148–168 threads the bilayer; it reads ILLSLIEVCGHGFIAGDLGPS. A topological domain (extracellular) is located at residue T169. Residues 170–190 traverse the membrane as a helical segment; the sequence is IVGSAAFNMFIIIGICVYVIP. Topologically, residues 191 to 201 are cytoplasmic; that stretch reads DGETRKIKHLR. The helical transmembrane segment at 202–222 threads the bilayer; the sequence is VFFVTAAWSIFAYIWLYMILA. Residues 223 to 230 are Extracellular-facing; the sequence is VFSPGVVQ. The chain crosses the membrane as a helical span at residues 231-251; the sequence is VWEGLLTLFFFPVCVLLAWVA. Topologically, residues 252–727 are cytoplasmic; sequence DKRLLFYKYM…DESGEERLPS (476 aa). Positions 253 to 272 are putative calmodulin-binding region; it reads KRLLFYKYMHKKYRTDKHRG. 2 Calx-beta domains span residues 390–485 and 519–618; these read EPED…VRLS and ATVT…VIEM. Ca(2+) is bound by residues E409, D445, D470, D471, I473, E475, E478, D525, D526, D527, E543, D579, D605, and E673. A helical membrane pass occupies residues 728–748; that stretch reads CFDYVMHFLTVFWKVLFACVP. At 749–755 the chain is on the extracellular side; it reads PTEYCHG. A helical membrane pass occupies residues 756–776; it reads WACFVVSILIIGMLTAIIGDL. The Cytoplasmic portion of the chain corresponds to 777 to 779; it reads ASH. A helical membrane pass occupies residues 780–800; that stretch reads FGCTIGLKDSVTAVVFVAFGT. Residues 801–829 lie on the Extracellular side of the membrane; it reads SVPDTFASKAAALQDVYADASIGNVTGSN. N824 carries N-linked (GlcNAc...) asparagine glycosylation. Residues 830 to 850 traverse the membrane as a helical segment; it reads AVNVFLGIGLAWSVAAIYWAM. The Cytoplasmic portion of the chain corresponds to 851 to 861; it reads QGQEFHVSAGT. Residues 862–882 traverse the membrane as a helical segment; the sequence is LAFSVTLFTIFAFVCLSVLLY. The Extracellular portion of the chain corresponds to 883–904; that stretch reads RRRPHLGGELGGPRGCKLATTW. Residues 905 to 925 form a helical membrane-spanning segment; sequence LFVSLWLLYILFATLEAYCYI. Residues 926–928 lie on the Cytoplasmic side of the membrane; the sequence is KGF.

It belongs to the Ca(2+):cation antiporter (CaCA) (TC 2.A.19) family. SLC8 subfamily. In terms of assembly, interacts with AKAP1. In terms of tissue distribution, detected in gray and white matter in the spinal cord. Detected in hippocampus neurons. Detected in brain cortex neurons. Detected in skeletal muscle (at protein level). Isoform 1 and isoform 2 are highly expressed in brain; levels are higher for isoform 2. Isoform 1 and isoform 2 are detected in soleus muscle; levels are higher for isoform 1. Detected in gastrocnemius muscle.

The protein resides in the cell membrane. The protein localises to the perikaryon. It is found in the cell projection. Its subcellular location is the dendrite. It localises to the dendritic spine. The protein resides in the sarcolemma. The protein localises to the cytoplasm. It is found in the sarcoplasm. Its subcellular location is the cell junction. It localises to the mitochondrion outer membrane. The protein resides in the perinuclear region. The protein localises to the endoplasmic reticulum membrane. The enzyme catalyses Ca(2+)(in) + 3 Na(+)(out) = Ca(2+)(out) + 3 Na(+)(in). With respect to regulation, calcium transport is stimulated by cytoplasmic Ca(2+) and is inhibited by Na(+). Isoform 1 is more sensitive to stimulation by Ca(2+) than isoform 2. Isoform 2 is more sensitive to inactivation by Na(+). Mediates the electrogenic exchange of Ca(2+) against Na(+) ions across the cell membrane, and thereby contributes to the regulation of cytoplasmic Ca(2+) levels and Ca(2+)-dependent cellular processes. Contributes to cellular Ca(2+) homeostasis in excitable cells, both in muscle and in brain. In a first phase, voltage-gated channels mediate the rapid increase of cytoplasmic Ca(2+) levels due to release of Ca(2+) stores from the endoplasmic reticulum. SLC8A3 mediates the export of Ca(2+) from the cell during the next phase, so that cytoplasmic Ca(2+) levels rapidly return to baseline. Contributes to Ca(2+) transport during excitation-contraction coupling in muscle. In neurons, contributes to the rapid decrease of cytoplasmic Ca(2+) levels back to baseline after neuronal activation, and thereby contributes to modulate synaptic plasticity, learning and memory. Required for normal oligodendrocyte differentiation and for normal myelination. Mediates Ca(2+) efflux from mitochondria and contributes to mitochondrial Ca(2+) ion homeostasis. Isoform 1 displays higher calcium exchanger activity than isoform 2, probably because isoform 1 has a lower threshold for activation by cytoplasmic Ca(2+). The chain is Sodium/calcium exchanger 3 from Mus musculus (Mouse).